The primary structure comprises 424 residues: MADNDDLLDYEDEEQTETTAVENQEAPKKDVKGTYVSIHSSGFRDFLLKPEILRAIVDCGFEHPSEVQHECIPQAVLGMDILCQAKSGMGKTAVFVLATLQQLEPSDNNTCHVLVMCHTRELAFQISKEYERFSKYMPTVKVAVFFGGMAIQKDEETLKSGTPHIVVGTPGRILALIRNKKLNLKLLKHFVLDECDKMLEQLDMRRDVQEIFRSTPHGKQVMMFSATLSKDIRPVCKKFMQDPMEVYVDDEAKLTLHGLQQHYVNLKENEKNKKLFELLDVLEFNQVVIFVKSVQRCVALSQLLTEQNFPAIGIHRGMTQEERLNRYQQFKDFQKRILVATNLFGRGMDIERVNIVFNYDMPEDSDTYLHRVARAGRFGTKGLAITFVSDENDAKILNEVQDRFDVNISELPEEIDLSTYIEGR.

Over residues 1–16 (MADNDDLLDYEDEEQT) the composition is skewed to acidic residues. Positions 1 to 27 (MADNDDLLDYEDEEQTETTAVENQEAP) are disordered. Positions 41–69 (SGFRDFLLKPEILRAIVDCGFEHPSEVQH) match the Q motif motif. A Helicase ATP-binding domain is found at 72-246 (IPQAVLGMDI…KKFMQDPMEV (175 aa)). Position 85-92 (85-92 (AKSGMGKT)) interacts with ATP. A DECD box motif is present at residues 193–196 (DECD). The Helicase C-terminal domain occupies 258 to 419 (GLQQHYVNLK…ELPEEIDLST (162 aa)).

This sequence belongs to the DEAD box helicase family. DECD subfamily. As to quaternary structure, component of the spliceosome. Interacts with the exon junction complex.

It is found in the nucleus speckle. It carries out the reaction ATP + H2O = ADP + phosphate + H(+). Required for mRNA export out of the nucleus. Probable RNA helicase that may regulate entry into mitosis by down-regulating the expression of other genes whose activity may be rate-limiting for entry into mitosis during embryogenesis. Binds to salivary gland chromosomes and modifies position effect variegation. Promotes an open chromatin structure that favors transcription during development by regulating the spread of heterochromatin. This chain is ATP-dependent RNA helicase WM6 (Hel25E), found in Drosophila melanogaster (Fruit fly).